Here is a 31-residue protein sequence, read N- to C-terminus: Fibrinogen beta chain (31 aa).

Residues 1–10 (HYYDDTDEEE) show a composition bias toward acidic residues. The interval 1 to 31 (HYYDDTDEEERIVSTVDARGHRPLDKKREEA) is disordered. Position 2 is a sulfotyrosine; partial (Tyr2). Tyr3 carries the sulfotyrosine modification. Over residues 18–31 (ARGHRPLDKKREEA) the composition is skewed to basic and acidic residues.

In terms of assembly, heterohexamer; disulfide linked. Contains 2 sets of 3 non-identical chains (alpha, beta and gamma). The 2 heterotrimers are in head to head conformation with the N-termini in a small central domain. Post-translationally, conversion of fibrinogen to fibrin is triggered by thrombin, which cleaves fibrinopeptides A and B from alpha and beta chains, and thus exposes the N-terminal polymerization sites responsible for the formation of the soft clot.

It localises to the secreted. Its function is as follows. Cleaved by the protease thrombin to yield monomers which, together with fibrinogen alpha (FGA) and fibrinogen gamma (FGG), polymerize to form an insoluble fibrin matrix. Fibrin has a major function in hemostasis as one of the primary components of blood clots. In addition, functions during the early stages of wound repair to stabilize the lesion and guide cell migration during re-epithelialization. Was originally thought to be essential for platelet aggregation, based on in vitro studies using anticoagulated blood. However subsequent studies have shown that it is not absolutely required for thrombus formation in vivo. Enhances expression of SELP in activated platelets. Maternal fibrinogen is essential for successful pregnancy. Fibrin deposition is also associated with infection, where it protects against IFNG-mediated hemorrhage. May also facilitate the antibacterial immune response via both innate and T-cell mediated pathways. The chain is Fibrinogen beta chain (FGB) from Canis lupus familiaris (Dog).